The chain runs to 356 residues: Dual-specificity RNA methyltransferase RlmN (356 aa).

The active-site Proton acceptor is the E92. One can recognise a Radical SAM core domain in the interval 98–334 (EKDRGTLCIS…MRRTRGEDID (237 aa)). Cysteines 105 and 337 form a disulfide. [4Fe-4S] cluster contacts are provided by C112, C116, and C119. S-adenosyl-L-methionine contacts are provided by residues 162 to 163 (GE), S194, 216 to 218 (SLH), and N294. Catalysis depends on C337, which acts as the S-methylcysteine intermediate.

It belongs to the radical SAM superfamily. RlmN family. It depends on [4Fe-4S] cluster as a cofactor.

The protein localises to the cytoplasm. It carries out the reaction adenosine(2503) in 23S rRNA + 2 reduced [2Fe-2S]-[ferredoxin] + 2 S-adenosyl-L-methionine = 2-methyladenosine(2503) in 23S rRNA + 5'-deoxyadenosine + L-methionine + 2 oxidized [2Fe-2S]-[ferredoxin] + S-adenosyl-L-homocysteine. The enzyme catalyses adenosine(37) in tRNA + 2 reduced [2Fe-2S]-[ferredoxin] + 2 S-adenosyl-L-methionine = 2-methyladenosine(37) in tRNA + 5'-deoxyadenosine + L-methionine + 2 oxidized [2Fe-2S]-[ferredoxin] + S-adenosyl-L-homocysteine. Specifically methylates position 2 of adenine 2503 in 23S rRNA and position 2 of adenine 37 in tRNAs. m2A2503 modification seems to play a crucial role in the proofreading step occurring at the peptidyl transferase center and thus would serve to optimize ribosomal fidelity. The protein is Dual-specificity RNA methyltransferase RlmN of Vesicomyosocius okutanii subsp. Calyptogena okutanii (strain HA).